A 177-amino-acid chain; its full sequence is Ribosome rescue factor SmrB (177 aa).

In terms of domain architecture, Smr spans 98–173 (LDMHGMKQDE…GAGAILVLLS (76 aa)).

The protein belongs to the SmrB family. In terms of assembly, associates with collided ribosomes, but not with correctly translating polysomes.

Its function is as follows. Acts as a ribosome collision sensor. Detects stalled/collided disomes (pairs of ribosomes where the leading ribosome is stalled and a second ribosome has collided with it) and endonucleolytically cleaves mRNA at the 5' boundary of the stalled ribosome. Stalled/collided disomes form a new interface (primarily via the 30S subunits) that binds SmrB. Cleaved mRNA becomes available for tmRNA ligation, leading to ribosomal subunit dissociation and rescue of stalled ribosomes. The chain is Ribosome rescue factor SmrB from Aliivibrio fischeri (strain ATCC 700601 / ES114) (Vibrio fischeri).